The chain runs to 1061 residues: Transcription termination factor 2 (1061 aa).

2 disordered regions span residues 1 to 163 (MSSE…TAEA) and 212 to 253 (ILSS…VKTS). Positions 32–46 (LSKSSRLSKSSRPSS) are enriched in low complexity. Phosphoserine is present on residues Ser108 and Ser110. Positions 138-152 (LSDDDSEIEYSDEVQ) are enriched in acidic residues. 2 positions are modified to phosphoserine: Ser214 and Ser215. Thr216 carries the phosphothreonine modification. Polar residues predominate over residues 237–253 (KSLSPRSSAGASVVKTS). In terms of domain architecture, Helicase ATP-binding spans 452–652 (WRERKLPRGG…YALLKFLRCS (201 aa)). Residue 465 to 472 (DDMGLGKT) coordinates ATP. The segment at 485–523 (GQEMSEGKDESSDSDSEDDKNKKRKSVTGWKSKGRKDTR) is disordered. The segment covering 506–522 (KKRKSVTGWKSKGRKDT) has biased composition (basic residues). A DEAH box motif is present at residues 603 to 606 (DEAH). One can recognise a Helicase C-terminal domain in the interval 891 to 1056 (KINMVIQILK…SSKLTIDDLK (166 aa)).

The protein belongs to the SNF2/RAD54 helicase family.

The protein localises to the nucleus. Its function is as follows. DsDNA-dependent ATPase which acts as a transcription termination factor by coupling ATP hydrolysis with removal of RNA polymerase II from the DNA template. The chain is Transcription termination factor 2 (lds) from Drosophila melanogaster (Fruit fly).